Reading from the N-terminus, the 56-residue chain is Large ribosomal subunit protein bL32 (56 aa).

Positions 1-20 are enriched in basic residues; it reads MAVPKRRTSRSNTRSRRSQW. The disordered stretch occupies residues 1-24; sequence MAVPKRRTSRSNTRSRRSQWKAKV.

Belongs to the bacterial ribosomal protein bL32 family.

In Frankia casuarinae (strain DSM 45818 / CECT 9043 / HFP020203 / CcI3), this protein is Large ribosomal subunit protein bL32.